The chain runs to 199 residues: Probable GTP-binding protein EngB (199 aa).

Positions 25–199 (IGMEVAFVGY…LKRVLNNWLR (175 aa)) constitute an EngB-type G domain. Residues Ser-40 and Thr-62 each coordinate Mg(2+).

Belongs to the TRAFAC class TrmE-Era-EngA-EngB-Septin-like GTPase superfamily. EngB GTPase family. The cofactor is Mg(2+).

Functionally, necessary for normal cell division and for the maintenance of normal septation. The chain is Probable GTP-binding protein EngB from Blochmanniella pennsylvanica (strain BPEN).